The following is a 92-amino-acid chain: Defensin-like protein 249 (92 aa).

The first 24 residues, Met1–Gly24, serve as a signal peptide directing secretion. Intrachain disulfides connect Cys34-Cys91, Cys45-Cys74, Cys53-Cys84, and Cys72-Cys86.

The protein belongs to the DEFL family.

Its subcellular location is the secreted. This chain is Defensin-like protein 249 (SCRL7), found in Arabidopsis thaliana (Mouse-ear cress).